We begin with the raw amino-acid sequence, 326 residues long: Vitamin B12 import system permease protein BtuC (326 aa).

The next 9 helical transmembrane spans lie at 15 to 35, 61 to 81, 88 to 108, 112 to 132, 146 to 166, 184 to 204, 240 to 260, 274 to 294, and 302 to 322; these read WLLCLSVLMLLALLLSLCAGE, LAVLLVGAALAISGAVMQALF, PGLLGVSNGAGVGLIAAVLLG, LPNWALGLCAIAGALIITLIL, LLAGVALGIICSALMTWAIYF, GGVDWRQSWLMLALIPVLLWI, GWMVGVSVALAGAIGFIGLVI, VLLPGCALAGASALLLADIVA, and ELPIGVVTATLGAPVFIWLLL.

The protein belongs to the binding-protein-dependent transport system permease family. FecCD subfamily. The complex is composed of two ATP-binding proteins (BtuD), two transmembrane proteins (BtuC) and a solute-binding protein (BtuF).

Its subcellular location is the cell inner membrane. In terms of biological role, part of the ABC transporter complex BtuCDF involved in vitamin B12 import. Involved in the translocation of the substrate across the membrane. This is Vitamin B12 import system permease protein BtuC from Shigella boydii serotype 18 (strain CDC 3083-94 / BS512).